The following is a 227-amino-acid chain: NADH-quinone oxidoreductase subunit C (227 aa).

The protein belongs to the complex I 30 kDa subunit family. In terms of assembly, NDH-1 is composed of 14 different subunits. Subunits NuoB, C, D, E, F, and G constitute the peripheral sector of the complex.

Its subcellular location is the cell inner membrane. The enzyme catalyses a quinone + NADH + 5 H(+)(in) = a quinol + NAD(+) + 4 H(+)(out). Its function is as follows. NDH-1 shuttles electrons from NADH, via FMN and iron-sulfur (Fe-S) centers, to quinones in the respiratory chain. The immediate electron acceptor for the enzyme in this species is believed to be ubiquinone. Couples the redox reaction to proton translocation (for every two electrons transferred, four hydrogen ions are translocated across the cytoplasmic membrane), and thus conserves the redox energy in a proton gradient. This chain is NADH-quinone oxidoreductase subunit C, found in Coxiella burnetii (strain RSA 331 / Henzerling II).